We begin with the raw amino-acid sequence, 340 residues long: Ketol-acid reductoisomerase (NADP(+)) (340 aa).

Residues 2-182 (AELYYDNQAD…GCTRAGVLRT (181 aa)) form the KARI N-terminal Rossmann domain. NADP(+) is bound by residues 25 to 28 (FGSQ), serine 51, serine 53, and 83 to 86 (DIGQ). The active site involves histidine 108. Position 134 (glycine 134) interacts with NADP(+). Residues 183–328 (TFAEETETDL…RELRRMMPFV (146 aa)) enclose the KARI C-terminal knotted domain. Mg(2+)-binding residues include aspartate 191, glutamate 195, glutamate 227, and glutamate 231. Serine 252 is a binding site for substrate.

Belongs to the ketol-acid reductoisomerase family. Mg(2+) is required as a cofactor.

It carries out the reaction (2R)-2,3-dihydroxy-3-methylbutanoate + NADP(+) = (2S)-2-acetolactate + NADPH + H(+). The catalysed reaction is (2R,3R)-2,3-dihydroxy-3-methylpentanoate + NADP(+) = (S)-2-ethyl-2-hydroxy-3-oxobutanoate + NADPH + H(+). The protein operates within amino-acid biosynthesis; L-isoleucine biosynthesis; L-isoleucine from 2-oxobutanoate: step 2/4. Its pathway is amino-acid biosynthesis; L-valine biosynthesis; L-valine from pyruvate: step 2/4. Its function is as follows. Involved in the biosynthesis of branched-chain amino acids (BCAA). Catalyzes an alkyl-migration followed by a ketol-acid reduction of (S)-2-acetolactate (S2AL) to yield (R)-2,3-dihydroxy-isovalerate. In the isomerase reaction, S2AL is rearranged via a Mg-dependent methyl migration to produce 3-hydroxy-3-methyl-2-ketobutyrate (HMKB). In the reductase reaction, this 2-ketoacid undergoes a metal-dependent reduction by NADPH to yield (R)-2,3-dihydroxy-isovalerate. This is Ketol-acid reductoisomerase (NADP(+)) from Chloroflexus aurantiacus (strain ATCC 29366 / DSM 635 / J-10-fl).